Consider the following 118-residue polypeptide: Large ribosomal subunit protein uL18 (118 aa).

Belongs to the universal ribosomal protein uL18 family. Part of the 50S ribosomal subunit; part of the 5S rRNA/L5/L18/L25 subcomplex. Contacts the 5S and 23S rRNAs.

This is one of the proteins that bind and probably mediate the attachment of the 5S RNA into the large ribosomal subunit, where it forms part of the central protuberance. In Rickettsia akari (strain Hartford), this protein is Large ribosomal subunit protein uL18.